The chain runs to 425 residues: Homogentisate 1,2-dioxygenase (425 aa).

His283 serves as the catalytic Proton acceptor. Fe cation is bound by residues His326 and Glu332. Homogentisate-binding residues include Tyr341 and His362. His362 is a Fe cation binding site.

It belongs to the homogentisate dioxygenase family. Hexamer; dimer of trimers. The cofactor is Fe cation.

It carries out the reaction homogentisate + O2 = 4-maleylacetoacetate + H(+). The protein operates within amino-acid degradation; L-phenylalanine degradation; acetoacetate and fumarate from L-phenylalanine: step 4/6. Functionally, involved in the catabolism of homogentisate (2,5-dihydroxyphenylacetate or 2,5-OH-PhAc), a central intermediate in the degradation of phenylalanine and tyrosine. Catalyzes the oxidative ring cleavage of the aromatic ring of homogentisate to yield maleylacetoacetate. This chain is Homogentisate 1,2-dioxygenase, found in Caulobacter vibrioides (strain ATCC 19089 / CIP 103742 / CB 15) (Caulobacter crescentus).